We begin with the raw amino-acid sequence, 239 residues long: 3,4-dihydroxyphthalate decarboxylase (239 aa).

Glu84 acts as the Proton donor/acceptor in catalysis. Residues Glu84, His103, His105, and His171 each coordinate a divalent metal cation.

It belongs to the aldolase class II family. The cofactor is a divalent metal cation.

The enzyme catalyses 3,4-dihydroxyphthalate + H(+) = 3,4-dihydroxybenzoate + CO2. The protein operates within xenobiotic degradation; phthalate degradation. In terms of biological role, catalyzes the decarboxylation of 3,4-dihydroxyphthalate to protocatechuate (3,4-dihydroxybenzoate) during phthalate metabolism. The chain is 3,4-dihydroxyphthalate decarboxylase from Terrabacter sp. (strain DBF63).